The chain runs to 323 residues: Mycothiol acetyltransferase (323 aa).

N-acetyltransferase domains lie at 21-176 (ELLR…VSLR) and 173-323 (VSLR…LTKN). E44 is a binding site for 1D-myo-inositol 2-(L-cysteinylamino)-2-deoxy-alpha-D-glucopyranoside. Residue 98-100 (LAV) coordinates acetyl-CoA. Residues E200, K240, and E253 each coordinate 1D-myo-inositol 2-(L-cysteinylamino)-2-deoxy-alpha-D-glucopyranoside. Residues 257–259 (VGV) and 264–270 (QGLGLGK) each bind acetyl-CoA. Y291 is a binding site for 1D-myo-inositol 2-(L-cysteinylamino)-2-deoxy-alpha-D-glucopyranoside.

Belongs to the acetyltransferase family. MshD subfamily. In terms of assembly, monomer.

The enzyme catalyses 1D-myo-inositol 2-(L-cysteinylamino)-2-deoxy-alpha-D-glucopyranoside + acetyl-CoA = mycothiol + CoA + H(+). In terms of biological role, catalyzes the transfer of acetyl from acetyl-CoA to desacetylmycothiol (Cys-GlcN-Ins) to form mycothiol. This Paenarthrobacter aurescens (strain TC1) protein is Mycothiol acetyltransferase.